Consider the following 188-residue polypeptide: ATP synthase subunit b 1 (188 aa).

Residues 35 to 55 (VHFSSHFFWLAISFGFFYLFI) traverse the membrane as a helical segment.

It belongs to the ATPase B chain family. F-type ATPases have 2 components, F(1) - the catalytic core - and F(0) - the membrane proton channel. F(1) has five subunits: alpha(3), beta(3), gamma(1), delta(1), epsilon(1). F(0) has three main subunits: a(1), b(2) and c(10-14). The alpha and beta chains form an alternating ring which encloses part of the gamma chain. F(1) is attached to F(0) by a central stalk formed by the gamma and epsilon chains, while a peripheral stalk is formed by the delta and b chains.

The protein localises to the cell inner membrane. F(1)F(0) ATP synthase produces ATP from ADP in the presence of a proton or sodium gradient. F-type ATPases consist of two structural domains, F(1) containing the extramembraneous catalytic core and F(0) containing the membrane proton channel, linked together by a central stalk and a peripheral stalk. During catalysis, ATP synthesis in the catalytic domain of F(1) is coupled via a rotary mechanism of the central stalk subunits to proton translocation. Functionally, component of the F(0) channel, it forms part of the peripheral stalk, linking F(1) to F(0). The polypeptide is ATP synthase subunit b 1 (Bartonella tribocorum (strain CIP 105476 / IBS 506)).